The sequence spans 162 residues: Caveolin-2 (162 aa).

The Cytoplasmic segment spans residues 1–86 (MGLETEKADV…FEISKYVMYK (86 aa)). A Phosphotyrosine; by SRC modification is found at Y19. 2 positions are modified to phosphoserine: S20 and S23. Y27 carries the post-translational modification Phosphotyrosine; by SRC. S36 is subject to Phosphoserine. The segment at residues 87 to 107 (FLTVFLAIPLAFIAGILFATL) is an intramembrane region (helical). Topologically, residues 108–162 (SCLHIWILMPFVKTCLMVLPSVQTIWKSVTDVFIAPLCTSIGRSFSSVSLQLSQD) are cytoplasmic.

It belongs to the caveolin family. As to quaternary structure, monomer or homodimer. Interacts with CAV1; the interaction forms a stable heterooligomeric complex that is required for targeting to lipid rafts and for caveolae formation. Tyrosine phosphorylated forms do not form heterooligomers with the Tyr-19-phosphorylated form existing as a monomer or dimer, and the Tyr-27-form as a monomer only. Interacts (tyrosine phosphorylated form) with the SH2 domain-containing proteins, RASA1, NCK1 and SRC. Interacts (tyrosine phosphorylated form) with INSR, the interaction (Tyr-27-phosphorylated form) is increased on insulin stimulation. Interacts (Tyr-19 phosphorylated form) with MAPK1 (phosphorylated form); the interaction, promoted by insulin, leads to nuclear location and MAPK1 activation. Interacts with STAT3; the interaction is increased on insulin-induced tyrosine phosphorylation leading to STAT activation. Phosphorylated on serine and tyrosine residues. CAV1 promotes phosphorylation on Ser-23 which then targets the complex to the plasma membrane, lipid rafts and caveolae. Phosphorylation on Ser-36 appears to modulate mitosis in endothelial cells. Phosphorylation on both Tyr-19 and Tyr-27 is required for insulin-induced 'Ser-727' phosphorylation of STAT3 and its activation. Phosphorylation on Tyr-19 is required for insulin-induced phosphorylation of MAPK1 and DNA binding of STAT3. Tyrosine phosphorylation is induced by both EGF and insulin (By. similarity).

It is found in the nucleus. The protein resides in the cytoplasm. The protein localises to the golgi apparatus membrane. It localises to the cell membrane. Its subcellular location is the membrane. It is found in the caveola. Its function is as follows. May act as a scaffolding protein within caveolar membranes. Interacts directly with G-protein alpha subunits and can functionally regulate their activity. Acts as an accessory protein in conjunction with CAV1 in targeting to lipid rafts and driving caveolae formation. The Ser-36 phosphorylated form has a role in modulating mitosis in endothelial cells. Positive regulator of cellular mitogenesis of the MAPK signaling pathway. Required for the insulin-stimulated nuclear translocation and activation of MAPK1 and STAT3, and the subsequent regulation of cell cycle progression. This Papio anubis (Olive baboon) protein is Caveolin-2 (CAV2).